Here is a 253-residue protein sequence, read N- to C-terminus: Imidazole glycerol phosphate synthase subunit HisF (253 aa).

Active-site residues include aspartate 11 and aspartate 130.

This sequence belongs to the HisA/HisF family. In terms of assembly, heterodimer of HisH and HisF.

The protein localises to the cytoplasm. The catalysed reaction is 5-[(5-phospho-1-deoxy-D-ribulos-1-ylimino)methylamino]-1-(5-phospho-beta-D-ribosyl)imidazole-4-carboxamide + L-glutamine = D-erythro-1-(imidazol-4-yl)glycerol 3-phosphate + 5-amino-1-(5-phospho-beta-D-ribosyl)imidazole-4-carboxamide + L-glutamate + H(+). The protein operates within amino-acid biosynthesis; L-histidine biosynthesis; L-histidine from 5-phospho-alpha-D-ribose 1-diphosphate: step 5/9. IGPS catalyzes the conversion of PRFAR and glutamine to IGP, AICAR and glutamate. The HisF subunit catalyzes the cyclization activity that produces IGP and AICAR from PRFAR using the ammonia provided by the HisH subunit. In Geobacter metallireducens (strain ATCC 53774 / DSM 7210 / GS-15), this protein is Imidazole glycerol phosphate synthase subunit HisF.